A 294-amino-acid polypeptide reads, in one-letter code: Universal stress protein MSMEG_3950/MSMEI_3859 (294 aa).

ATP is bound at residue Gly13. Lys109 is covalently cross-linked (Isoglutamyl lysine isopeptide (Lys-Gln) (interchain with Q-Cter in protein Pup)). ATP is bound by residues 117–123 (GNRGMGA), 131–132 (ST), Gly164, Asp197, 261–267 (GSHGRGG), and 275–277 (SVS).

Belongs to the universal stress protein A family.

The polypeptide is Universal stress protein MSMEG_3950/MSMEI_3859 (Mycolicibacterium smegmatis (strain ATCC 700084 / mc(2)155) (Mycobacterium smegmatis)).